A 195-amino-acid chain; its full sequence is Peptidyl-tRNA hydrolase (195 aa).

Tyrosine 17 contacts tRNA. The Proton acceptor role is filled by histidine 22. TRNA contacts are provided by phenylalanine 68, asparagine 70, and asparagine 116.

The protein belongs to the PTH family. In terms of assembly, monomer.

The protein resides in the cytoplasm. The catalysed reaction is an N-acyl-L-alpha-aminoacyl-tRNA + H2O = an N-acyl-L-amino acid + a tRNA + H(+). Its function is as follows. Hydrolyzes ribosome-free peptidyl-tRNAs (with 1 or more amino acids incorporated), which drop off the ribosome during protein synthesis, or as a result of ribosome stalling. In terms of biological role, catalyzes the release of premature peptidyl moieties from peptidyl-tRNA molecules trapped in stalled 50S ribosomal subunits, and thus maintains levels of free tRNAs and 50S ribosomes. This is Peptidyl-tRNA hydrolase from Shewanella denitrificans (strain OS217 / ATCC BAA-1090 / DSM 15013).